A 435-amino-acid chain; its full sequence is Serine--tRNA ligase (435 aa).

242-244 (TAE) is a binding site for L-serine. 273–275 (RSE) contacts ATP. Residue glutamate 296 participates in L-serine binding. 360 to 363 (EISS) contributes to the ATP binding site. Residue serine 396 coordinates L-serine.

The protein belongs to the class-II aminoacyl-tRNA synthetase family. Type-1 seryl-tRNA synthetase subfamily. Homodimer. The tRNA molecule binds across the dimer.

The protein resides in the cytoplasm. It catalyses the reaction tRNA(Ser) + L-serine + ATP = L-seryl-tRNA(Ser) + AMP + diphosphate + H(+). It carries out the reaction tRNA(Sec) + L-serine + ATP = L-seryl-tRNA(Sec) + AMP + diphosphate + H(+). It participates in aminoacyl-tRNA biosynthesis; selenocysteinyl-tRNA(Sec) biosynthesis; L-seryl-tRNA(Sec) from L-serine and tRNA(Sec): step 1/1. In terms of biological role, catalyzes the attachment of serine to tRNA(Ser). Is also able to aminoacylate tRNA(Sec) with serine, to form the misacylated tRNA L-seryl-tRNA(Sec), which will be further converted into selenocysteinyl-tRNA(Sec). This is Serine--tRNA ligase from Vibrio vulnificus (strain YJ016).